A 433-amino-acid polypeptide reads, in one-letter code: N-lysine methyltransferase SMYD2 (433 aa).

In terms of domain architecture, SET spans 7 to 241 (GGLERFCSPG…PGEEVFTSYI (235 aa)). 17–19 (KGR) serves as a coordination point for S-adenosyl-L-methionine. Zn(2+) is bound by residues cysteine 52, cysteine 55, cysteine 65, cysteine 68, cysteine 74, cysteine 78, histidine 86, and cysteine 90. The MYND-type zinc finger occupies 52-90 (CEFCFARKEGLSKCGRCKQAFYCNVECQREDWPMHKLEC). S-adenosyl-L-methionine contacts are provided by residues histidine 137, 206 to 207 (NH), and 258 to 260 (YFF).

The protein belongs to the class V-like SAM-binding methyltransferase superfamily. In terms of assembly, interacts with RNA polymerase II and HELZ. Interacts with SIN3A and HDAC1. Interacts (via MYND-type zinc finger) with EPB41L3. Interacts (via SET domain) with p53/TP53. Interacts with RB1 and HSP90AA1.

It is found in the cytoplasm. It localises to the cytosol. The protein localises to the nucleus. The enzyme catalyses L-lysyl(4)-[histone H3] + 3 S-adenosyl-L-methionine = N(6),N(6),N(6)-trimethyl-L-lysyl(4)-[histone H3] + 3 S-adenosyl-L-homocysteine + 3 H(+). It carries out the reaction L-lysyl-[protein] + S-adenosyl-L-methionine = N(6)-methyl-L-lysyl-[protein] + S-adenosyl-L-homocysteine + H(+). Its function is as follows. Protein-lysine N-methyltransferase that methylates both histones and non-histone proteins, including p53/TP53 and RB1. Specifically trimethylates histone H3 'Lys-4' (H3K4me3) in vivo. The activity requires interaction with HSP90alpha. Shows even higher methyltransferase activity on p53/TP53. Monomethylates 'Lys-370' of p53/TP53, leading to decreased DNA-binding activity and subsequent transcriptional regulation activity of p53/TP53. Monomethylates RB1 at 'Lys-860'. This Bos taurus (Bovine) protein is N-lysine methyltransferase SMYD2 (SMYD2).